Reading from the N-terminus, the 104-residue chain is Large ribosomal subunit protein uL24 (104 aa).

The protein belongs to the universal ribosomal protein uL24 family. As to quaternary structure, part of the 50S ribosomal subunit.

Its function is as follows. One of two assembly initiator proteins, it binds directly to the 5'-end of the 23S rRNA, where it nucleates assembly of the 50S subunit. Functionally, one of the proteins that surrounds the polypeptide exit tunnel on the outside of the subunit. The protein is Large ribosomal subunit protein uL24 of Erwinia tasmaniensis (strain DSM 17950 / CFBP 7177 / CIP 109463 / NCPPB 4357 / Et1/99).